Consider the following 362-residue polypeptide: Ribosome-binding ATPase YchF (362 aa).

An OBG-type G domain is found at 2–258 (LSAGIVGLPN…LDANGRQDWL (257 aa)). 11–16 (NVGKST) serves as a coordination point for ATP. Mg(2+) is bound by residues Ser15 and Thr35. Positions 281–347 (GLWSFFTFGK…EAKKQGLVRL (67 aa)) constitute a TGS domain.

It belongs to the TRAFAC class OBG-HflX-like GTPase superfamily. OBG GTPase family. YchF/OLA1 subfamily. It depends on Mg(2+) as a cofactor.

In terms of biological role, ATPase that binds to both the 70S ribosome and the 50S ribosomal subunit in a nucleotide-independent manner. This chain is Ribosome-binding ATPase YchF, found in Mycoplasma pneumoniae (strain ATCC 29342 / M129 / Subtype 1) (Mycoplasmoides pneumoniae).